A 180-amino-acid polypeptide reads, in one-letter code: Threonylcarbamoyl-AMP synthase (180 aa).

In terms of domain architecture, YrdC-like spans 1–180 (MRARALQHFL…DLITGAIVRP (180 aa)).

The protein belongs to the SUA5 family. TsaC subfamily.

The protein resides in the cytoplasm. It carries out the reaction L-threonine + hydrogencarbonate + ATP = L-threonylcarbamoyladenylate + diphosphate + H2O. Its function is as follows. Required for the formation of a threonylcarbamoyl group on adenosine at position 37 (t(6)A37) in tRNAs that read codons beginning with adenine. Catalyzes the conversion of L-threonine, HCO(3)(-)/CO(2) and ATP to give threonylcarbamoyl-AMP (TC-AMP) as the acyladenylate intermediate, with the release of diphosphate. The polypeptide is Threonylcarbamoyl-AMP synthase (Methylobacillus flagellatus (strain ATCC 51484 / DSM 6875 / VKM B-1610 / KT)).